Here is an 87-residue protein sequence, read N- to C-terminus: Small ribosomal subunit protein bS20 (87 aa).

Residues 1–25 form a disordered region; sequence MANIKSAKKRAVQSEKHRLHNASRR.

This sequence belongs to the bacterial ribosomal protein bS20 family.

Binds directly to 16S ribosomal RNA. The protein is Small ribosomal subunit protein bS20 of Baumannia cicadellinicola subsp. Homalodisca coagulata.